The primary structure comprises 95 residues: MSVDAATVRRIAHLARIAVSEGEVPHLQGELNAMLAFVEQLSEVNVEGVEAMTSVTPMQMKKRQDVVNDGEIADDIVANAPATEGHFFLVPKVVE.

It belongs to the GatC family. As to quaternary structure, heterotrimer of A, B and C subunits.

It carries out the reaction L-glutamyl-tRNA(Gln) + L-glutamine + ATP + H2O = L-glutaminyl-tRNA(Gln) + L-glutamate + ADP + phosphate + H(+). The catalysed reaction is L-aspartyl-tRNA(Asn) + L-glutamine + ATP + H2O = L-asparaginyl-tRNA(Asn) + L-glutamate + ADP + phosphate + 2 H(+). Functionally, allows the formation of correctly charged Asn-tRNA(Asn) or Gln-tRNA(Gln) through the transamidation of misacylated Asp-tRNA(Asn) or Glu-tRNA(Gln) in organisms which lack either or both of asparaginyl-tRNA or glutaminyl-tRNA synthetases. The reaction takes place in the presence of glutamine and ATP through an activated phospho-Asp-tRNA(Asn) or phospho-Glu-tRNA(Gln). The protein is Aspartyl/glutamyl-tRNA(Asn/Gln) amidotransferase subunit C of Bradyrhizobium diazoefficiens (strain JCM 10833 / BCRC 13528 / IAM 13628 / NBRC 14792 / USDA 110).